The sequence spans 748 residues: Photosystem I P700 chlorophyll a apoprotein A1 (748 aa).

The next 8 helical transmembrane spans lie at 69–92, 155–178, 194–218, 290–308, 345–368, 384–410, 432–454, and 529–547; these read IFSA…FHGA, LYVT…FHYH, LNHH…HVSL, VAHH…GHMY, WHAN…HHMY, LSLF…IYMV, AIIS…LYIH, and FMVH…LILL. The [4Fe-4S] cluster site is built by cysteine 571 and cysteine 580. A run of 2 helical transmembrane segments spans residues 587–608 and 662–684; these read HVFL…HFSW and LSAY…MFLF. Residue histidine 673 participates in chlorophyll a' binding. 2 residues coordinate chlorophyll a: methionine 681 and tyrosine 689. Tryptophan 690 lines the phylloquinone pocket. The helical transmembrane segment at 722-742 threads the bilayer; sequence AVGVAHYLLGGIATTWAFFLA.

The protein belongs to the PsaA/PsaB family. As to quaternary structure, the PsaA/B heterodimer binds the P700 chlorophyll special pair and subsequent electron acceptors. PSI consists of a core antenna complex that captures photons, and an electron transfer chain that converts photonic excitation into a charge separation. The eukaryotic PSI reaction center is composed of at least 11 subunits. P700 is a chlorophyll a/chlorophyll a' dimer, A0 is one or more chlorophyll a, A1 is one or both phylloquinones and FX is a shared 4Fe-4S iron-sulfur center. is required as a cofactor.

It is found in the plastid. It localises to the chloroplast thylakoid membrane. The catalysed reaction is reduced [plastocyanin] + hnu + oxidized [2Fe-2S]-[ferredoxin] = oxidized [plastocyanin] + reduced [2Fe-2S]-[ferredoxin]. Functionally, psaA and PsaB bind P700, the primary electron donor of photosystem I (PSI), as well as the electron acceptors A0, A1 and FX. PSI is a plastocyanin/cytochrome c6-ferredoxin oxidoreductase, converting photonic excitation into a charge separation, which transfers an electron from the donor P700 chlorophyll pair to the spectroscopically characterized acceptors A0, A1, FX, FA and FB in turn. Oxidized P700 is reduced on the lumenal side of the thylakoid membrane by plastocyanin or cytochrome c6. The polypeptide is Photosystem I P700 chlorophyll a apoprotein A1 (Cyanidioschyzon merolae (strain NIES-3377 / 10D) (Unicellular red alga)).